A 218-amino-acid chain; its full sequence is MAFYLPDWSCCGLWLFGRPRNRYSQLPEEPETFECPDRWRAEIDLGLPPGVQVGDLLRNEQTMGSLRQVYLLAVQANSITDHLKRFDAVRVPESCRGVVEAQVAKLEAVRSVIWNTMISLAVSGIEMDENGLKALLDKQAGDSLALMEMEKVATALKMDETGAWAQEISAVVSSVTAPSASAPFINSAFEPEVPTPVLAPPPVVRQPEHSGPTELALT.

The S-palmitoyl cysteine; by host moiety is linked to residue Cys-11. The segment at 199–218 is disordered; sequence APPPVVRQPEHSGPTELALT.

Belongs to the herpesviridae UL51 family. Homodimer. Interacts with BBRF2; the BBRF2-BSRF1 complexes oligomerize which might play a role in tethering the viral nucleocapsids to the host Golgi membrane during secondary envelopment. Interacts with BGLF3.5. Interacts with BALF1. Interacts with glycoprotein gB. Interacts with glycoprotein heterodimer gH/gL. Post-translationally, phosphorylated. In terms of processing, palmitoylation is necessary for Golgi localization.

The protein localises to the host cytoplasm. Its subcellular location is the virion. It localises to the host Golgi apparatus. Plays several roles during the time course of infection, including egress of virus particles from the perinuclear space and secondary envelopment of cytoplasmic capsids that bud into specific trans-Golgi network (TGN)-derived membranes. The chain is Tegument protein UL51 homolog from Homo sapiens (Human).